Reading from the N-terminus, the 525-residue chain is Probable protein kinase UbiB (525 aa).

The 383-residue stretch at Glu118 to Ala500 folds into the Protein kinase domain. ATP-binding positions include Val124 to Val132 and Lys150. The Proton acceptor role is filled by Asp285. Residues Leu501–Leu521 form a helical membrane-spanning segment.

This sequence belongs to the ABC1 family. UbiB subfamily.

The protein localises to the cell inner membrane. It participates in cofactor biosynthesis; ubiquinone biosynthesis [regulation]. Is probably a protein kinase regulator of UbiI activity which is involved in aerobic coenzyme Q (ubiquinone) biosynthesis. This chain is Probable protein kinase UbiB, found in Burkholderia mallei (strain SAVP1).